The primary structure comprises 104 residues: ATP-dependent Clp protease adapter protein ClpS (104 aa).

The protein belongs to the ClpS family. In terms of assembly, binds to the N-terminal domain of the chaperone ClpA.

Its function is as follows. Involved in the modulation of the specificity of the ClpAP-mediated ATP-dependent protein degradation. The chain is ATP-dependent Clp protease adapter protein ClpS from Burkholderia thailandensis (strain ATCC 700388 / DSM 13276 / CCUG 48851 / CIP 106301 / E264).